Consider the following 300-residue polypeptide: Nucleotide-binding protein TM1040_2438 (300 aa).

An ATP-binding site is contributed by 24-31 (GPSGAGRT). GTP is bound at residue 71-74 (DPRN).

The protein belongs to the RapZ-like family.

Displays ATPase and GTPase activities. This is Nucleotide-binding protein TM1040_2438 from Ruegeria sp. (strain TM1040) (Silicibacter sp.).